Consider the following 862-residue polypeptide: DNA mismatch repair protein MutS (862 aa).

608–615 serves as a coordination point for ATP; it reads GPNMAGKS.

This sequence belongs to the DNA mismatch repair MutS family.

Its function is as follows. This protein is involved in the repair of mismatches in DNA. It is possible that it carries out the mismatch recognition step. This protein has a weak ATPase activity. This chain is DNA mismatch repair protein MutS, found in Bacteroides thetaiotaomicron (strain ATCC 29148 / DSM 2079 / JCM 5827 / CCUG 10774 / NCTC 10582 / VPI-5482 / E50).